Here is a 432-residue protein sequence, read N- to C-terminus: 3-phosphoshikimate 1-carboxyvinyltransferase (432 aa).

3-phosphoshikimate-binding residues include lysine 23, serine 24, and arginine 28. Residue lysine 23 participates in phosphoenolpyruvate binding. Phosphoenolpyruvate is bound by residues glycine 95 and arginine 123. Positions 167, 169, 317, and 344 each coordinate 3-phosphoshikimate. Glutamine 169 provides a ligand contact to phosphoenolpyruvate. Aspartate 317 serves as the catalytic Proton acceptor. Positions 348 and 390 each coordinate phosphoenolpyruvate.

Belongs to the EPSP synthase family. As to quaternary structure, monomer.

It localises to the cytoplasm. It carries out the reaction 3-phosphoshikimate + phosphoenolpyruvate = 5-O-(1-carboxyvinyl)-3-phosphoshikimate + phosphate. It functions in the pathway metabolic intermediate biosynthesis; chorismate biosynthesis; chorismate from D-erythrose 4-phosphate and phosphoenolpyruvate: step 6/7. In terms of biological role, catalyzes the transfer of the enolpyruvyl moiety of phosphoenolpyruvate (PEP) to the 5-hydroxyl of shikimate-3-phosphate (S3P) to produce enolpyruvyl shikimate-3-phosphate and inorganic phosphate. This chain is 3-phosphoshikimate 1-carboxyvinyltransferase, found in Staphylococcus aureus (strain MRSA252).